A 505-amino-acid chain; its full sequence is Lysine--tRNA ligase (505 aa).

Mg(2+)-binding residues include glutamate 415 and glutamate 422.

The protein belongs to the class-II aminoacyl-tRNA synthetase family. Homodimer. Requires Mg(2+) as cofactor.

It is found in the cytoplasm. It catalyses the reaction tRNA(Lys) + L-lysine + ATP = L-lysyl-tRNA(Lys) + AMP + diphosphate. This Salmonella arizonae (strain ATCC BAA-731 / CDC346-86 / RSK2980) protein is Lysine--tRNA ligase.